The sequence spans 447 residues: Cysteine--tRNA ligase (447 aa).

Cysteine 28 contributes to the Zn(2+) binding site. The 'HIGH' region motif lies at proline 30–asparagine 40. 3 residues coordinate Zn(2+): cysteine 211, histidine 236, and glutamate 240. Residues lysine 268–serine 272 carry the 'KMSKS' region motif. Lysine 271 is a binding site for ATP.

This sequence belongs to the class-I aminoacyl-tRNA synthetase family. In terms of assembly, monomer. Zn(2+) is required as a cofactor.

It is found in the cytoplasm. The catalysed reaction is tRNA(Cys) + L-cysteine + ATP = L-cysteinyl-tRNA(Cys) + AMP + diphosphate. This chain is Cysteine--tRNA ligase, found in Streptococcus pneumoniae (strain ATCC BAA-255 / R6).